A 694-amino-acid polypeptide reads, in one-letter code: Elongation factor G (694 aa).

In terms of domain architecture, tr-type G spans 8–282 (KDYRNIGIMA…AVIDYLPSPV (275 aa)). GTP-binding positions include 17-24 (AHIDAGKT), 81-85 (DTPGH), and 135-138 (NKMD).

Belongs to the TRAFAC class translation factor GTPase superfamily. Classic translation factor GTPase family. EF-G/EF-2 subfamily.

The protein localises to the cytoplasm. Functionally, catalyzes the GTP-dependent ribosomal translocation step during translation elongation. During this step, the ribosome changes from the pre-translocational (PRE) to the post-translocational (POST) state as the newly formed A-site-bound peptidyl-tRNA and P-site-bound deacylated tRNA move to the P and E sites, respectively. Catalyzes the coordinated movement of the two tRNA molecules, the mRNA and conformational changes in the ribosome. The protein is Elongation factor G of Mesomycoplasma hyopneumoniae (strain J / ATCC 25934 / NCTC 10110) (Mycoplasma hyopneumoniae).